We begin with the raw amino-acid sequence, 415 residues long: Meiotic driver wtf36 (415 aa).

Disordered stretches follow at residues 1 to 49 and 67 to 99; these read MKNK…DLNN and TTPPDYDENRLHITDEGNNPPNTHRENHSSGTA. A compositionally biased stretch (basic and acidic residues) spans 11–29; sequence SMDEMSAKNDNEIDLEKGP. Helical transmembrane passes span 105–125, 142–162, 169–189, 205–225, 240–260, 274–294, and 298–318; these read FLIKLLISFTPIVLLNAPAVC, WTLFGFWCLVCTLALIFLTYF, AVKVTVIFLAQCVKVTVIFLA, VTAISLAKCIKVTAIFLAQCV, VVIIWLLWVVICYTLFLRSKF, CSISAALLLFLLYVRLPFWTL, and FSGLFQVLGVQSCVVIVTKGL.

The protein belongs to the WTF family. In terms of assembly, homomer. Forms protein aggregates. The two isoforms can interact with each other and with themselves. High sequence similarity is required for their interaction.

The protein localises to the spore membrane. It is found in the vacuole membrane. The protein resides in the ascus epiplasm. It localises to the cytoplasm. Its subcellular location is the endoplasmic reticulum membrane. Promotes unequal transmission of alleles from the parental zygote to progeny spores by acting as poison/antidote system where the poison and antidote proteins are produced from the same locus; the poison component is trans-acting and targets all spores within an ascus whereas the antidote component is spore-specific, leading to poisoning of all progeny that do not inherit the allele. In terms of biological role, localizes isoform 2 to the vacuole thereby facilitating its degradation. Functionally, forms toxic aggregates that disrupt spore maturation. This Schizosaccharomyces pombe (Fission yeast) protein is Meiotic driver wtf36.